The sequence spans 297 residues: Transmembrane protein 169 (297 aa).

The segment at 1–88 (MEESAPVESQ…EGEDFLDYPG (88 aa)) is disordered. The Extracellular segment spans residues 1–159 (MEESAPVESQ…CQVGADQGPH (159 aa)). Over residues 22–31 (RRAVAAVLAL) the composition is skewed to low complexity. Acidic residues-rich tracts occupy residues 61–70 (KTDEEPEESE) and 78–88 (EEGEDFLDYPG). A helical transmembrane segment spans residues 160 to 180 (VVLWTLVCLPVVFVLSFVVSF). Over 181–210 (YYGTITWYNIFLVYNEERTFWHKISCCPCL) the chain is Cytoplasmic. The helical transmembrane segment at 211–231 (ILFYPVLIMTMASSLGLYAAV) threads the bilayer. Topologically, residues 232 to 297 (AQLSWSWAAW…PIQEVETSTV (66 aa)) are extracellular.

Its subcellular location is the membrane. The chain is Transmembrane protein 169 (Tmem169) from Mus musculus (Mouse).